The sequence spans 213 residues: Putative 3-methyladenine DNA glycosylase (213 aa).

Belongs to the DNA glycosylase MPG family.

The chain is Putative 3-methyladenine DNA glycosylase from Paraburkholderia phytofirmans (strain DSM 17436 / LMG 22146 / PsJN) (Burkholderia phytofirmans).